The following is a 168-amino-acid chain: Large ribosomal subunit protein uL10 (168 aa).

The protein belongs to the universal ribosomal protein uL10 family. As to quaternary structure, part of the ribosomal stalk of the 50S ribosomal subunit. The N-terminus interacts with L11 and the large rRNA to form the base of the stalk. The C-terminus forms an elongated spine to which L12 dimers bind in a sequential fashion forming a multimeric L10(L12)X complex.

Functionally, forms part of the ribosomal stalk, playing a central role in the interaction of the ribosome with GTP-bound translation factors. This chain is Large ribosomal subunit protein uL10, found in Pediococcus pentosaceus (strain ATCC 25745 / CCUG 21536 / LMG 10740 / 183-1w).